Reading from the N-terminus, the 246-residue chain is Probable fimbrial chaperone YadV (246 aa).

The signal sequence occupies residues 1-25; that stretch reads MFFNTKHTTALCFVTCMAFSSSSIA.

Belongs to the periplasmic pilus chaperone family.

The protein localises to the periplasm. Its function is as follows. Part of the yadCKLM-htrE-yadVN fimbrial operon. Could contribute to adhesion to various surfaces in specific environmental niches. The protein is Probable fimbrial chaperone YadV (yadV) of Escherichia coli (strain K12).